The primary structure comprises 204 residues: Cardiotrophin-2 (204 aa).

Residues 1 to 22 (MYCLLATPLCLLSLLLPPLSPA) form the signal peptide. An N-linked (GlcNAc...) asparagine glycan is attached at asparagine 44.

Belongs to the IL-6 superfamily. As to quaternary structure, binds to tripartite CNTF receptor complex consisting of CNTF alpha chain, LIFR and IL6ST (in vitro). As to expression, not detected in adult tissues.

It is found in the secreted. Functionally, increases the platelet count associated with splenomegaly. May have an important role in neuronal precursor development and maturation. The sequence is that of Cardiotrophin-2 (Ctf2) from Mus musculus (Mouse).